A 155-amino-acid chain; its full sequence is Pathogenesis-related protein 2 (155 aa).

It belongs to the BetVI family.

The chain is Pathogenesis-related protein 2 from Phaseolus vulgaris (Kidney bean).